Reading from the N-terminus, the 724-residue chain is DNA ligase (724 aa).

Residues 44-48 (DADYD), 93-94 (SL), and E127 contribute to the NAD(+) site. The active-site N6-AMP-lysine intermediate is the K129. R150, E186, K307, and K331 together coordinate NAD(+). Zn(2+) is bound by residues C437, C440, C461, and C467. Positions 646-724 (TEGSPVAGKT…EDEWLALIGG (79 aa)) constitute a BRCT domain.

Belongs to the NAD-dependent DNA ligase family. LigA subfamily. Mg(2+) serves as cofactor. It depends on Mn(2+) as a cofactor.

The enzyme catalyses NAD(+) + (deoxyribonucleotide)n-3'-hydroxyl + 5'-phospho-(deoxyribonucleotide)m = (deoxyribonucleotide)n+m + AMP + beta-nicotinamide D-nucleotide.. In terms of biological role, DNA ligase that catalyzes the formation of phosphodiester linkages between 5'-phosphoryl and 3'-hydroxyl groups in double-stranded DNA using NAD as a coenzyme and as the energy source for the reaction. It is essential for DNA replication and repair of damaged DNA. In Agrobacterium fabrum (strain C58 / ATCC 33970) (Agrobacterium tumefaciens (strain C58)), this protein is DNA ligase.